The chain runs to 286 residues: General stress protein 39 (286 aa).

Residues 1–26 are disordered; it reads MANYPKELPAQTQSRQPGIESEMNPS. 46 to 70 serves as a coordination point for NAD(+); that stretch reads LITGGDSGIGRAVSVAYAKEGADIA. Ser-178 provides a ligand contact to substrate. Tyr-191 functions as the Proton acceptor in the catalytic mechanism.

The protein belongs to the short-chain dehydrogenases/reductases (SDR) family.

In Bacillus subtilis (strain 168), this protein is General stress protein 39 (ydaD).